Consider the following 384-residue polypeptide: tRNA-specific 2-thiouridylase MnmA (384 aa).

ATP is bound by residues 9-16 (GMSGGVDS) and Met35. An interaction with target base in tRNA region spans residues 95 to 97 (NPD). Cys100 serves as the catalytic Nucleophile. Cys100 and Cys196 are disulfide-bonded. Gly124 provides a ligand contact to ATP. Residues 146-148 (KDQ) form an interaction with tRNA region. Residue Cys196 is the Cysteine persulfide intermediate of the active site. The interval 308 to 309 (RY) is interaction with tRNA.

Belongs to the MnmA/TRMU family.

The protein resides in the cytoplasm. The enzyme catalyses S-sulfanyl-L-cysteinyl-[protein] + uridine(34) in tRNA + AH2 + ATP = 2-thiouridine(34) in tRNA + L-cysteinyl-[protein] + A + AMP + diphosphate + H(+). In terms of biological role, catalyzes the 2-thiolation of uridine at the wobble position (U34) of tRNA, leading to the formation of s(2)U34. The sequence is that of tRNA-specific 2-thiouridylase MnmA from Paraburkholderia phymatum (strain DSM 17167 / CIP 108236 / LMG 21445 / STM815) (Burkholderia phymatum).